We begin with the raw amino-acid sequence, 184 residues long: Probable chorismate pyruvate-lyase 1 (184 aa).

3 residues coordinate substrate: Arg70, Leu108, and Glu166.

This sequence belongs to the UbiC family.

Its subcellular location is the cytoplasm. The enzyme catalyses chorismate = 4-hydroxybenzoate + pyruvate. Its pathway is cofactor biosynthesis; ubiquinone biosynthesis. Functionally, removes the pyruvyl group from chorismate, with concomitant aromatization of the ring, to provide 4-hydroxybenzoate (4HB) for the ubiquinone pathway. The polypeptide is Probable chorismate pyruvate-lyase 1 (Burkholderia pseudomallei (strain 1710b)).